A 387-amino-acid polypeptide reads, in one-letter code: 1-deoxy-D-xylulose 5-phosphate reductoisomerase (387 aa).

Residues T11, G12, S13, I14, G37, R38, Q39, and N127 each contribute to the NADPH site. K128 lines the 1-deoxy-D-xylulose 5-phosphate pocket. E129 is a binding site for NADPH. D153 lines the Mn(2+) pocket. Residues S154, E155, S179, and H200 each contribute to the 1-deoxy-D-xylulose 5-phosphate site. E155 is a binding site for Mn(2+). G206 lines the NADPH pocket. Residues S213, N218, K219, and E222 each coordinate 1-deoxy-D-xylulose 5-phosphate. E222 contacts Mn(2+).

Belongs to the DXR family. Mg(2+) is required as a cofactor. Requires Mn(2+) as cofactor.

It catalyses the reaction 2-C-methyl-D-erythritol 4-phosphate + NADP(+) = 1-deoxy-D-xylulose 5-phosphate + NADPH + H(+). It participates in isoprenoid biosynthesis; isopentenyl diphosphate biosynthesis via DXP pathway; isopentenyl diphosphate from 1-deoxy-D-xylulose 5-phosphate: step 1/6. Its function is as follows. Catalyzes the NADPH-dependent rearrangement and reduction of 1-deoxy-D-xylulose-5-phosphate (DXP) to 2-C-methyl-D-erythritol 4-phosphate (MEP). The polypeptide is 1-deoxy-D-xylulose 5-phosphate reductoisomerase (Symbiobacterium thermophilum (strain DSM 24528 / JCM 14929 / IAM 14863 / T)).